We begin with the raw amino-acid sequence, 520 residues long: Sodium-dependent dicarboxylate transporter SdcS (520 aa).

14 helical membrane-spanning segments follow: residues 30–50 (AGQLIGLILGPLLFLLTLLFF), 55–75 (LPWEGVYVLAITLWIATWWIT), 77–97 (AIPIAATSLLPIVLLPLGHIL), 104–124 (SEYGNDIIFLFLGGFILAIAM), 160–180 (SMFVSNTAAVMIMIPIGLAII), 207–227 (IGYAGTIGGLGTLIGTPPLII), 242–262 (FAKWMIVGIPTVIVLLGITWL), 298–318 (KVVQTIFVLASLLWITREFLL), 323–343 (VTSSVADGTIAIFISILLFVI), 362–382 (ELPWGVLILFGGGLALAKGIS), 399–419 (GVSPILIVIVITIFVLFLTEV), 428–448 (MILPILATLSVAVGVHPLLLM), 452–472 (AMAANCAYMLPVGTPPNAIIF), and 491–511 (LISAIIIILVVYYVMPIVLGI).

Belongs to the SLC13A/DASS transporter (TC 2.A.47) family. NADC subfamily.

It is found in the cell membrane. Its function is as follows. Mediates the transport of the dicarboxylates fumarate, malate, and succinate across the cytoplasmic membrane via a Na(+)-electrochemical gradient. The polypeptide is Sodium-dependent dicarboxylate transporter SdcS (sdcS) (Staphylococcus aureus (strain bovine RF122 / ET3-1)).